The following is a 192-amino-acid chain: Adenylate kinase (192 aa).

Position 12 to 17 (12 to 17 (GSGKTT)) interacts with ATP. Residues 34-63 (STGDLLRAEVASGSELGKTIDSFISKGNLV) form an NMP region. AMP-binding positions include T35, R40, 61-63 (NLV), 88-91 (GYPR), and Q95. Residues 130 to 136 (GRNRGAD) are LID. R131 contributes to the ATP binding site. AMP is bound by residues R133 and R145. R173 contributes to the ATP binding site.

Belongs to the adenylate kinase family. Monomer.

It localises to the cytoplasm. The catalysed reaction is AMP + ATP = 2 ADP. Its pathway is purine metabolism; AMP biosynthesis via salvage pathway; AMP from ADP: step 1/1. Its function is as follows. Catalyzes the reversible transfer of the terminal phosphate group between ATP and AMP. Plays an important role in cellular energy homeostasis and in adenine nucleotide metabolism. In Campylobacter jejuni subsp. jejuni serotype O:2 (strain ATCC 700819 / NCTC 11168), this protein is Adenylate kinase.